The chain runs to 52 residues: MASKNREIIKLKSTESSEMYWTVKNKKKTSGRLELKKYDRKLRKHVIFKEAK.

Belongs to the bacterial ribosomal protein bL33 family.

The protein is Large ribosomal subunit protein bL33 of Chlamydia trachomatis serovar L2 (strain ATCC VR-902B / DSM 19102 / 434/Bu).